Consider the following 228-residue polypeptide: Vacuolar-sorting protein snf7 (228 aa).

Coiled-coil stretches lie at residues 25–94 (ILGL…QINA) and 125–226 (EKVD…QAEM).

This sequence belongs to the SNF7 family. In terms of assembly, a component of the endosomal sorting required for transport complex III (ESCRT-III).

It localises to the cytoplasm. The protein localises to the endosome membrane. Required for the sorting and concentration of proteins resulting in the entry of these proteins into the invaginating vesicles of the multivesicular body (MVB). Also required for the proteolytic cleavage of the transcription factor pacc-1 in response to alkaline ambient pH. In Neurospora crassa (strain ATCC 24698 / 74-OR23-1A / CBS 708.71 / DSM 1257 / FGSC 987), this protein is Vacuolar-sorting protein snf7 (vsp-3).